The primary structure comprises 282 residues: Protein NEOXANTHIN-DEFICIENT 1 (282 aa).

Functionally, required for neoxanthin biosynthesis. Probably not involved directly in the enzymatic conversion of violaxanthin to neoxanthin. Is necessary but not sufficient for neoxanthin synthesis. The protein is Protein NEOXANTHIN-DEFICIENT 1 of Arabidopsis thaliana (Mouse-ear cress).